Consider the following 120-residue polypeptide: Large ribosomal subunit protein bL12 (120 aa).

It belongs to the bacterial ribosomal protein bL12 family. In terms of assembly, homodimer. Part of the ribosomal stalk of the 50S ribosomal subunit. Forms a multimeric L10(L12)X complex, where L10 forms an elongated spine to which 2 to 4 L12 dimers bind in a sequential fashion. Binds GTP-bound translation factors.

Its function is as follows. Forms part of the ribosomal stalk which helps the ribosome interact with GTP-bound translation factors. Is thus essential for accurate translation. This Listeria monocytogenes serotype 4b (strain CLIP80459) protein is Large ribosomal subunit protein bL12.